A 391-amino-acid chain; its full sequence is MEGAFAANWSAEAVNGSAAPPGTEGNRTAGPPQRNEALARVEVAVLSLILFLALSGNACVLLALRTTRHKHSRLFFFMKHLSIADLAVAVFQVLPQLLWDITFRFYGPDLLCRLVKYLQVVGMFASTYLLLLMSLDRCLAICQPLRSLRRRTDRLAVLATWLGCLVASAPQVHIFSLREVADGVFDCWAVFIQPWGPKAYITWITLAVYIVPVIVLAACYGLISFKIWQNLRLKTEAAAAEASAGAEGAAADCAGRAALARVSNVKLISKAKIRTVKMTFIVVLAFIVCWTPFFFKQMWSVWDADAPKEASAFIIAMLLASLNSCCNPWIYMLFTGHLFQDLVQRFLCCSFRRLKGSQLGETSVTKKIHSYTFVLSRHSSSQRSCSQPSTV.

Residues 1-38 (MEGAFAANWSAEAVNGSAAPPGTEGNRTAGPPQRNEAL) are Extracellular-facing. N-linked (GlcNAc...) asparagine glycans are attached at residues Asn8, Asn15, and Asn26. The chain crosses the membrane as a helical span at residues 39–63 (ARVEVAVLSLILFLALSGNACVLLA). The Cytoplasmic portion of the chain corresponds to 64–74 (LRTTRHKHSRL). The helical transmembrane segment at 75–97 (FFFMKHLSIADLAVAVFQVLPQL) threads the bilayer. Residues 98–113 (LWDITFRFYGPDLLCR) lie on the Extracellular side of the membrane. Cys112 and Cys187 form a disulfide bridge. The helical transmembrane segment at 114-135 (LVKYLQVVGMFASTYLLLLMSL) threads the bilayer. Over 136-154 (DRCLAICQPLRSLRRRTDR) the chain is Cytoplasmic. Residues 155–175 (LAVLATWLGCLVASAPQVHIF) traverse the membrane as a helical segment. The Extracellular portion of the chain corresponds to 176-202 (SLREVADGVFDCWAVFIQPWGPKAYIT). A helical transmembrane segment spans residues 203–225 (WITLAVYIVPVIVLAACYGLISF). At 226-277 (KIWQNLRLKTEAAAAEASAGAEGAAADCAGRAALARVSNVKLISKAKIRTVK) the chain is on the cytoplasmic side. A helical transmembrane segment spans residues 278 to 296 (MTFIVVLAFIVCWTPFFFK). Residues 297–311 (QMWSVWDADAPKEAS) lie on the Extracellular side of the membrane. A helical membrane pass occupies residues 312 to 334 (AFIIAMLLASLNSCCNPWIYMLF). Residues 335–391 (TGHLFQDLVQRFLCCSFRRLKGSQLGETSVTKKIHSYTFVLSRHSSSQRSCSQPSTV) are Cytoplasmic-facing. Ser370 carries the post-translational modification Phosphoserine.

The protein belongs to the G-protein coupled receptor 1 family. Vasopressin/oxytocin receptor subfamily.

The protein resides in the cell membrane. Receptor for oxytocin. The activity of this receptor is mediated by G proteins which activate a phosphatidylinositol-calcium second messenger system. In Ovis aries (Sheep), this protein is Oxytocin receptor (OXTR).